The following is a 90-amino-acid chain: Probable Fe(2+)-trafficking protein (90 aa).

This sequence belongs to the Fe(2+)-trafficking protein family.

Could be a mediator in iron transactions between iron acquisition and iron-requiring processes, such as synthesis and/or repair of Fe-S clusters in biosynthetic enzymes. The protein is Probable Fe(2+)-trafficking protein of Cupriavidus necator (strain ATCC 17699 / DSM 428 / KCTC 22496 / NCIMB 10442 / H16 / Stanier 337) (Ralstonia eutropha).